Consider the following 257-residue polypeptide: MQPIEQPGTGPDDITPESQDTNTAESAESGAETGHPRRIRSFVRRAGRTSTGQQRAINELGPRFQLPYTTEPLDWDAAFGRAGAKRIFEIGFGMGETTAHIAQLRPDDDFLGVEVHEPGVGALLKLIGEREIGNIRIVSHDAVEVLAQMIPEGTLDGIHVFFPDPWHKKRHNKRRLIQSPFVARLAAHLKPGGYLHCATDWEEYAHQMLEVLSSEPTLENTADGFAPRPDYRPVTKFEKRGLRLGHGVWDVVFRKRG.

Residues 1 to 58 (MQPIEQPGTGPDDITPESQDTNTAESAESGAETGHPRRIRSFVRRAGRTSTGQQRAIN) are disordered. The span at 16–26 (PESQDTNTAES) shows a compositional bias: polar residues. Residues 36–47 (PRRIRSFVRRAG) are compositionally biased toward basic residues. The S-adenosyl-L-methionine site is built by Glu89, Glu114, Asp141, and Asp164. Residue Asp164 is part of the active site. Lys168 is a substrate binding site. The segment at 170–175 (RHNKRR) is interaction with RNA. Residues Asp200 and 235–238 (TKFE) contribute to the substrate site.

This sequence belongs to the class I-like SAM-binding methyltransferase superfamily. TrmB family.

The catalysed reaction is guanosine(46) in tRNA + S-adenosyl-L-methionine = N(7)-methylguanosine(46) in tRNA + S-adenosyl-L-homocysteine. It functions in the pathway tRNA modification; N(7)-methylguanine-tRNA biosynthesis. Its function is as follows. Catalyzes the formation of N(7)-methylguanine at position 46 (m7G46) in tRNA. This chain is tRNA (guanine-N(7)-)-methyltransferase, found in Ralstonia pickettii (strain 12J).